The primary structure comprises 180 residues: ADP-ribosylation factor-like protein 1 (180 aa).

Gly2 carries N-myristoyl glycine lipidation. Residues 23–30 (GLDGAGKT), 66–70 (DLGGQ), and 125–128 (NKQD) contribute to the GTP site.

It belongs to the small GTPase superfamily. Arf family.

GTP-binding protein involved in protein trafficking; may modulate vesicle budding and uncoating within the Golgi apparatus. The polypeptide is ADP-ribosylation factor-like protein 1 (Arl1) (Drosophila melanogaster (Fruit fly)).